The following is a 151-amino-acid chain: Small ribosomal subunit protein uS15 (151 aa).

This sequence belongs to the universal ribosomal protein uS15 family.

The chain is Small ribosomal subunit protein uS15 (RPS13) from Agaricus bisporus (White button mushroom).